We begin with the raw amino-acid sequence, 1690 residues long: DNA-directed RNA polymerase subunit beta' (1690 aa).

The Zn(2+) site is built by cysteine 63, cysteine 65, cysteine 78, and cysteine 81. Aspartate 753, aspartate 755, and aspartate 757 together coordinate Mg(2+). Zn(2+) is bound by residues cysteine 1107, cysteine 1295, cysteine 1302, and cysteine 1305.

It belongs to the RNA polymerase beta' chain family. The RNAP catalytic core consists of 2 alpha, 1 beta, 1 beta' and 1 omega subunit. When a sigma factor is associated with the core the holoenzyme is formed, which can initiate transcription. Mg(2+) serves as cofactor. Zn(2+) is required as a cofactor.

It catalyses the reaction RNA(n) + a ribonucleoside 5'-triphosphate = RNA(n+1) + diphosphate. Its function is as follows. DNA-dependent RNA polymerase catalyzes the transcription of DNA into RNA using the four ribonucleoside triphosphates as substrates. This chain is DNA-directed RNA polymerase subunit beta', found in Thermotoga petrophila (strain ATCC BAA-488 / DSM 13995 / JCM 10881 / RKU-1).